The primary structure comprises 272 residues: Undecaprenyl-diphosphatase (272 aa).

Helical transmembrane passes span Ser6–Ser26, Ala45–Trp65, Thr92–Ile112, Leu115–Ala135, Tyr189–Leu209, Ala221–Ile241, and Ile251–Phe271.

Belongs to the UppP family.

Its subcellular location is the cell inner membrane. The enzyme catalyses di-trans,octa-cis-undecaprenyl diphosphate + H2O = di-trans,octa-cis-undecaprenyl phosphate + phosphate + H(+). Its function is as follows. Catalyzes the dephosphorylation of undecaprenyl diphosphate (UPP). Confers resistance to bacitracin. This chain is Undecaprenyl-diphosphatase, found in Pectobacterium atrosepticum (strain SCRI 1043 / ATCC BAA-672) (Erwinia carotovora subsp. atroseptica).